The following is a 327-amino-acid chain: Lipid phosphate phosphatase 1 (327 aa).

The next 6 helical transmembrane spans lie at 51-71 (WIIL…SPFY), 93-113 (IWSV…CFYL), 118-138 (VYDL…TGVI), 187-207 (FPSG…LYLS), 217-237 (GHVA…LVGI), and 244-264 (WHHW…AAFC).

The protein belongs to the PA-phosphatase related phosphoesterase family. Strongly expressed in leaves, moderately in roots, weakly in floral hamps and flower buds, and not detected in adult flowers and seedpods.

The protein localises to the membrane. PA phosphatase activity inhibited by N-ethylmaleimide with an IC(50) value of 10 mM. Its function is as follows. Plays a general role in cellular responses to stress, may be by attenuating the signal produced by phospholipases. Exhibits both diacylglycerol pyrophosphate (DGPP) phosphatase and phosphatidate (PA) phosphatase activities. Substrate preference is diacylglycerol pyrophosphate &gt; phosphatidate. The sequence is that of Lipid phosphate phosphatase 1 (LPP1) from Arabidopsis thaliana (Mouse-ear cress).